The primary structure comprises 75 residues: Cytoplasmic envelopment protein 3 (75 aa).

Glycine 2 carries the N-myristoyl glycine; by host lipid modification. Residues 53–65 (EGLEYDEDSENDE) are compositionally biased toward acidic residues. The segment at 53-75 (EGLEYDEDSENDELLFLPNKKPN) is disordered.

It belongs to the herpesviridae cytoplasmic envelopment protein 3 family. As to quaternary structure, interacts with BGLF2; this interaction is essential for the proper localization of each protein to the assembly complex and thus for the production of infectious virus. Myristoylation and palmitoylation (probably on one or more of the nearby cysteines at the N-terminus) enable membrane-binding and Golgi apparatus-specific targeting and are essential for efficient packaging. Post-translationally, phosphorylated. Phosphorylation does not seem to be required for recycling to the host Golgi apparatus. Packaging is selective for underphosphorylated forms.

It is found in the virion tegument. The protein resides in the virion membrane. The protein localises to the host cell membrane. It localises to the host Golgi apparatus membrane. Functionally, plays an important role in the cytoplasmic envelopment of tegument proteins and capsids during the assembly and egress processes. Also participates in viral entry at the fusion step probably by regulating the core fusion machinery. In Homo sapiens (Human), this protein is Cytoplasmic envelopment protein 3.